The chain runs to 538 residues: Calcium-dependent protein kinase 3 (538 aa).

The interval 23 to 70 (PKKSIERIKKKKDSNKSIKSQHKFEGSKISNKNNELKDVKSKDPKNYE) is disordered. Basic and acidic residues predominate over residues 56–68 (NELKDVKSKDPKN). The Protein kinase domain maps to 112–367 (NLSEEPLGKG…ASEALKHPWF (256 aa)). ATP is bound by residues 118–126 (LGKGTYGCV) and Lys141. Catalysis depends on Asp232, which acts as the Proton acceptor. Positions 387–395 (NFKNYALLL) match the J domain autoinhibitory motif motif. A j domain region spans residues 387 to 422 (NFKNYALLLKLQKLAMTIIAQQSNDYDLQQLKAVFL). Positions 396 to 405 (KLQKLAMTII) match the J domain EF-hand interaction motif motif. 3 EF-hand domains span residues 412-447 (YDLQQLKAVFLYLDEDGKGNITKNQLKKGLENSGLK), 450-481 (QNFDVLLDQIDSDGSGRIDYTEFLAAALDRKH), and 482-517 (LSKKLIYCAFRVFDVDNDGEITTAELAHVTFFVILF). The Ca(2+) site is built by Asp460, Asp462, Ser464, Arg466, Glu471, Asp495, Asp497, Asp499, Glu501, and Glu506.

It belongs to the protein kinase superfamily. Ser/Thr protein kinase family. CDPK subfamily. Requires Mg(2+) as cofactor.

The protein resides in the cytoplasm. The catalysed reaction is L-seryl-[protein] + ATP = O-phospho-L-seryl-[protein] + ADP + H(+). The enzyme catalyses L-threonyl-[protein] + ATP = O-phospho-L-threonyl-[protein] + ADP + H(+). Its activity is regulated as follows. Activated by calcium. Upon calcium binding to the EF-hand domain 2, the C-terminus of the junction domain (J domain) undergoes a conformational change which results in the dissociation of the pseudo-substrate inhibitory motif from the catalytic domain. This, in turn, may facilitate the autophosphorylation of the activation loop at Thr-273, which leads to the kinase activation. In terms of biological role, calcium-dependent protein kinase which acts as a sensor and effector of intracellular Ca(2+) levels probably in part downstream of cGMP-activated PKG kinase. In the mosquito midgut, regulates the gliding motility of the ookinete which is essential for the ookinete to invade the midgut epithelium. However, another study showed that while required for ookinete invasion of the midgut epithelium, is not required for ookinete gliding motility. This chain is Calcium-dependent protein kinase 3, found in Plasmodium yoelii yoelii.